A 334-amino-acid polypeptide reads, in one-letter code: MKEKIAYLGMGIWGFCLASLLANKGYRVVGWARNPDLIAQLQIEKRHPQAPDIPLHPNLSFTTDMEEAVNEASMIVEGVSSAGIRPVSEQLKAITDLKVPFVITSKGIEQHTGLLLSEIVVEIFGNNASQYLGYLSGPSIAREVLKGCPCSVVISAYNPDTLKKIHNAFLTPTFRVYPNSDLKGVALGGALKNIIAIACGISDGFHFGDNAKSGLVTRGLHEIRKFATIMDCRPDTLNGLAGLGDLCTTCFSSLSRNTKFGKLIAQGLTLEQAKAEIGMVVEGAYTALSAYQIAKHHKIDMPITTGIYRVLYENLDIKEGIAALLQRNTKEEYL.

NADPH is bound by residues Trp13, Arg33, and Lys106. The sn-glycerol 3-phosphate site is built by Lys106, Gly137, and Ser139. Position 141 (Ala141) interacts with NADPH. Sn-glycerol 3-phosphate-binding residues include Lys192, Asp245, Ser255, Arg256, and Asn257. Catalysis depends on Lys192, which acts as the Proton acceptor. Arg256 is an NADPH binding site. 2 residues coordinate NADPH: Val280 and Glu282.

This sequence belongs to the NAD-dependent glycerol-3-phosphate dehydrogenase family.

The protein localises to the cytoplasm. The enzyme catalyses sn-glycerol 3-phosphate + NAD(+) = dihydroxyacetone phosphate + NADH + H(+). It catalyses the reaction sn-glycerol 3-phosphate + NADP(+) = dihydroxyacetone phosphate + NADPH + H(+). Its pathway is membrane lipid metabolism; glycerophospholipid metabolism. Its function is as follows. Catalyzes the reduction of the glycolytic intermediate dihydroxyacetone phosphate (DHAP) to sn-glycerol 3-phosphate (G3P), the key precursor for phospholipid synthesis. The protein is Glycerol-3-phosphate dehydrogenase [NAD(P)+] of Chlamydia felis (strain Fe/C-56) (Chlamydophila felis).